Here is a 78-residue protein sequence, read N- to C-terminus: Small ribosomal subunit protein bS18 (78 aa).

It belongs to the bacterial ribosomal protein bS18 family. In terms of assembly, part of the 30S ribosomal subunit. Forms a tight heterodimer with protein bS6.

In terms of biological role, binds as a heterodimer with protein bS6 to the central domain of the 16S rRNA, where it helps stabilize the platform of the 30S subunit. The polypeptide is Small ribosomal subunit protein bS18 (Limosilactobacillus fermentum (strain NBRC 3956 / LMG 18251) (Lactobacillus fermentum)).